Here is an 85-residue protein sequence, read N- to C-terminus: Large ribosomal subunit protein bL27 (85 aa).

The interval 1-20 is disordered; sequence MATKKAGGSTRNGRDSEAKR.

Belongs to the bacterial ribosomal protein bL27 family.

In Haemophilus influenzae (strain ATCC 51907 / DSM 11121 / KW20 / Rd), this protein is Large ribosomal subunit protein bL27.